The chain runs to 567 residues: Geranylgeranyl transferase type-2 subunit alpha (567 aa).

PFTA repeat units follow at residues 44–78 (LDESVLELTSQILGANPDFATLWNCRREVLQQLEV), 88–122 (LVKAELGFLESCLRVNPKSYGTWHHRCWLLSRLPE), 124–158 (NWARELELCARFLEVDERNFHCWDYRRFVAAQAAV), 159–193 (PPAEELAFTDSLITRNFSNYSSWHYRSCLLPQLHP), 207–241 (VLLKELELVQNAFFTDPNDQSAWFYHRWLLGRADP), and 363–397 (VLQSELESCKELQELEPENKWCLLTIILLMRALDP). Position 98 is a phosphoserine (S98). LRR repeat units follow at residues 442–463 (EVRVLHLGHKDLTVLCHLEQLL), 464–486 (LVTHLDLSHNRLRALPPALAALR), 487–508 (CLEVLQANDNAIESLDGVTNLP), 509–530 (RLQELILCNNRLQQPAVLQPLT), and 534–555 (RLTLLNLQGNPLCQAEGSSEHL).

Belongs to the protein prenyltransferase subunit alpha family. As to quaternary structure, heterotrimer composed of RABGGTA, RABGGTB and CHM; within this trimer, RABGGTA and RABGGTB form the catalytic component B, while CHM (component A) mediates peptide substrate binding. The Rab GGTase dimer (RGGT) interacts with CHM (component A) prior to Rab protein binding; the association is stabilized by geranylgeranyl pyrophosphate (GGpp). The CHM:RGGT:Rab complex is destabilized by GGpp. Interacts with non-phosphorylated form of RAB8A; phosphorylation of RAB8A at 'Thr-72' disrupts this interaction.

It carries out the reaction geranylgeranyl diphosphate + L-cysteinyl-[protein] = S-geranylgeranyl-L-cysteinyl-[protein] + diphosphate. The enzymatic reaction requires the aid of a Rab escort protein (also called component A), such as CHM. Catalyzes the transfer of a geranylgeranyl moiety from geranylgeranyl diphosphate to both cysteines of Rab proteins with the C-terminal sequence -XXCC, -XCXC and -CCXX, such as RAB1A, RAB3A, RAB5A and RAB7A. This chain is Geranylgeranyl transferase type-2 subunit alpha (RABGGTA), found in Bos taurus (Bovine).